We begin with the raw amino-acid sequence, 333 residues long: Neuropeptides B/W receptor type 2 (333 aa).

At 1-45 (MQAAGHPEPLDSRGSFSLPTMGANVSQDNGTGHNATFSEPLPFLY) the chain is on the extracellular side. N-linked (GlcNAc...) asparagine glycans are attached at residues N24, N29, and N34. A helical transmembrane segment spans residues 46 to 69 (VLLPAVYSGICAVGLTGNTAVILV). The Cytoplasmic portion of the chain corresponds to 70-80 (ILRAPKMKTVT). Residues 81–105 (NVFILNLAVADGLFTLVLPVNIAEH) traverse the membrane as a helical segment. At 106–120 (LLQYWPFGELLCKLV) the chain is on the extracellular side. C117 and C197 are disulfide-bonded. A helical membrane pass occupies residues 121–140 (LAVDHYNIFSSIYFLAVMSV). At 141 to 165 (DRYLVVLATVRSRHMPWRTYRGAKV) the chain is on the cytoplasmic side. A helical transmembrane segment spans residues 166 to 185 (ASLCVWLGVTVLVLPFFSFA). At 186–211 (GVYSNELQVPSCGLSFPWPEQVWFKA) the chain is on the extracellular side. A helical transmembrane segment spans residues 212–233 (SRVYTLVLGFVLPVCTICVLYT). Residues 234 to 257 (DLLRRLRAVRLRSGAKALGKARRK) are Cytoplasmic-facing. The helical transmembrane segment at 258–282 (VTVLVLVVLAVCLLCWTPFHLASVV) threads the bilayer. Residues 283 to 292 (ALTTDLPQTP) lie on the Extracellular side of the membrane. A helical transmembrane segment spans residues 293 to 307 (LVISMSYVITSLSYA). The Cytoplasmic portion of the chain corresponds to 308–333 (NSCLNPFLYAFLDDNFRKNFRSILRC).

Belongs to the G-protein coupled receptor 1 family. Detected at high levels in caudate nucleus, hippocampus and amygdala; at moderate levels in the adult brain, thalamus, parietal cortex, pituitary gland, adrenal gland and lymph nodes.

It is found in the cell membrane. In terms of biological role, interacts specifically with a number of opioid ligands. Receptor for neuropeptides B and W, which may be involved in neuroendocrine system regulation, food intake and the organization of other signals. The polypeptide is Neuropeptides B/W receptor type 2 (NPBWR2) (Homo sapiens (Human)).